We begin with the raw amino-acid sequence, 308 residues long: Probable manganese-dependent inorganic pyrophosphatase (308 aa).

Residues His-9, Asp-13, Asp-15, Asp-75, His-97, and Asp-149 each contribute to the Mn(2+) site.

This sequence belongs to the PPase class C family. Requires Mn(2+) as cofactor.

Its subcellular location is the cytoplasm. The enzyme catalyses diphosphate + H2O = 2 phosphate + H(+). In Listeria innocua serovar 6a (strain ATCC BAA-680 / CLIP 11262), this protein is Probable manganese-dependent inorganic pyrophosphatase.